Here is a 959-residue protein sequence, read N- to C-terminus: MNFLRGVMGGQSAGPQHTEAETIQKLCDRVASSTLLDDRRNAVRALKSLSKKYRLEVGIQAMEHLIHVLQTDRSDSEIIAYALDTLYNIISNDEEEEVEENSTRQSEDLGSQFTEIFIKQPENVTLLLSLLEEFDFHVRWPGVRLLTSLLKQLGPPVQQIILVSPMGVSKLMDLLADSREIIRNDGVLLLQALTRSNGAIQKIVAFENAFERLLDIITEEGNSDGGIVVEDCLILLQNLLKNNNSNQNFFKEGSYIQRMKAWFEVGDENPGWSAQKVTNLHLMLQLVRVLVSPTNPPGATSSCQKAMFQCGLLQQLCTILMATGIPADILTETINTVSEVIRGCQVNQDYFASVNAPSNPPRPAIVVLLMSMVNERQPFVLRCAVLYCFQCFLYKNEKGQGEIVATLLPSTIDATGNSVSAGQLLCGGLFSTDSLSNWCAAVALAHALQGNATQKEQLLRVQLATSIGNPPVSLLQQCTNILSQGSKIQTRVGLLMLLCTWLSNCPIAVTHFLHNSANVPFLTGQIAENLGEEEQLVQGLCALLLGISIYFNDNSLENYTKEKLKQLIEKRIGKENYIEKLGFISKHELYSRASQKPQPNFPSPEYMIFDHEFTKLVKELEGVITKAIYKSSEEDKKEEEVKKTLEQHDNIVTHYKNMIREQDLQLEELKQQVSTLKCQNEQLQTAVTQQASQIQQHKDQYNLLKVQLGKDNHHQGSHSDGAQVNGIQPEEISRLREEIEELRSHQVLLQSQLAEKDTVIENLRSSQVSGMSEQALATCSPRDAEQVAELKQELSALKSQLCSQSLEITRLQTENSELQQRAETLAKSVPVEGESELVTAAKTTDVEGRLSALLQETKELKNEIKALSEERTAIQKQLDSSNSTIAILQTEKDKLYLEVTDSKKEQDDLLVLLADQDQKILSLKSKLKDLGHPVEEEDESGDQEDDDDELDDGDRDQDI.

Residues 1–637 (MNFLRGVMGG…IYKSSEEDKK (637 aa)) are globular head. 12 ARM repeats span residues 20–60 (AETI…VGIQ), 61–121 (AMEH…IKQP), 123–163 (NVTL…IILV), 166–207 (MGVS…VAFE), 208–253 (NAFE…FKEG), 255–310 (YIQR…MFQC), 311–354 (GLLQ…FASV), 363–408 (PAIV…ATLL), 420–459 (SAGQLLCGGLFSTDSLSNWCAAVALAHALQGNATQKEQLL), 473–513 (SLLQ…THFL), 518–571 (NVPF…IEKR), and 573–630 (GKEN…AIYK). S50 carries the phosphoserine modification. The residue at position 202 (K202) is an N6-acetyllysine. Residues 638–930 (EEEVKKTLEQ…LSLKSKLKDL (293 aa)) are a coiled coil. The tract at residues 925–959 (SKLKDLGHPVEEEDESGDQEDDDDELDDGDRDQDI) is disordered. Over residues 935–959 (EEEDESGDQEDDDDELDDGDRDQDI) the composition is skewed to acidic residues. The residue at position 940 (S940) is a Phosphoserine.

Belongs to the VDP/USO1/EDE1 family. In terms of assembly, homodimer. Dimerizes by parallel association of the tails, resulting in an elongated structure with two globular head domains side by side, and a long rod-like tail structure. Interacts with MIF. Interacts with GM130/GOLGA2; interaction is disrupted upon phosphorylation of GM130/GOLGA2 by CDK1 at the onset of mitosis. Post-translationally, phosphorylated in a cell cycle-specific manner; phosphorylated in interphase but not in mitotic cells. Dephosphorylated protein associates with the Golgi membrane; phosphorylation promostes dissociation.

The protein localises to the cytoplasm. It localises to the cytosol. It is found in the golgi apparatus membrane. Its function is as follows. General vesicular transport factor required for intercisternal transport in the Golgi stack; it is required for transcytotic fusion and/or subsequent binding of the vesicles to the target membrane. May well act as a vesicular anchor by interacting with the target membrane and holding the vesicular and target membranes in proximity. The sequence is that of General vesicular transport factor p115 (Uso1) from Rattus norvegicus (Rat).